The following is a 245-amino-acid chain: Carbohydrate deacetylase (245 aa).

2 residues coordinate Mg(2+): H59 and H125.

The protein belongs to the YdjC deacetylase family. As to quaternary structure, homodimer. The cofactor is Mg(2+).

In terms of biological role, probably catalyzes the deacetylation of acetylated carbohydrates an important step in the degradation of oligosaccharides. The chain is Carbohydrate deacetylase from Listeria monocytogenes serotype 4a (strain HCC23).